We begin with the raw amino-acid sequence, 330 residues long: Ketol-acid reductoisomerase (NADP(+)) (330 aa).

The region spanning 1–181 (MKVFYDSDFK…GLSRAGVIQT (181 aa)) is the KARI N-terminal Rossmann domain. NADP(+) is bound by residues 24–27 (YGSQ), Arg-47, Ser-52, and 82–85 (DELQ). Residue His-107 is part of the active site. Residue Gly-133 coordinates NADP(+). The KARI C-terminal knotted domain maps to 182-327 (TFKEETETDL…AKLRKMCGLE (146 aa)). Mg(2+) is bound by residues Asp-190, Glu-194, Glu-226, and Glu-230. Ser-251 is a substrate binding site.

This sequence belongs to the ketol-acid reductoisomerase family. Mg(2+) serves as cofactor.

It catalyses the reaction (2R)-2,3-dihydroxy-3-methylbutanoate + NADP(+) = (2S)-2-acetolactate + NADPH + H(+). It carries out the reaction (2R,3R)-2,3-dihydroxy-3-methylpentanoate + NADP(+) = (S)-2-ethyl-2-hydroxy-3-oxobutanoate + NADPH + H(+). Its pathway is amino-acid biosynthesis; L-isoleucine biosynthesis; L-isoleucine from 2-oxobutanoate: step 2/4. It participates in amino-acid biosynthesis; L-valine biosynthesis; L-valine from pyruvate: step 2/4. In terms of biological role, involved in the biosynthesis of branched-chain amino acids (BCAA). Catalyzes an alkyl-migration followed by a ketol-acid reduction of (S)-2-acetolactate (S2AL) to yield (R)-2,3-dihydroxy-isovalerate. In the isomerase reaction, S2AL is rearranged via a Mg-dependent methyl migration to produce 3-hydroxy-3-methyl-2-ketobutyrate (HMKB). In the reductase reaction, this 2-ketoacid undergoes a metal-dependent reduction by NADPH to yield (R)-2,3-dihydroxy-isovalerate. This Methanococcus maripaludis (strain DSM 14266 / JCM 13030 / NBRC 101832 / S2 / LL) protein is Ketol-acid reductoisomerase (NADP(+)).